The sequence spans 377 residues: Opsin-1 (377 aa).

The Extracellular segment spans residues 1–58; that stretch reads MDPGPGLAALQAWAAKSPAYGAANQTVVDKVPPDMMHMIDPHWYQFPPMNPLWHALLG. Residue asparagine 24 is glycosylated (N-linked (GlcNAc...) asparagine). A helical transmembrane segment spans residues 59 to 79; the sequence is FTIGVLGFVSISGNGMVIYIF. Over 80-92 the chain is Cytoplasmic; it reads MSTKSLKTPSNLL. The helical transmembrane segment at 93-113 threads the bilayer; it reads VVNLAFSDFLMMCAMSPAMVV. Topologically, residues 114–129 are extracellular; the sequence is NCYYETWVWGPFACEL. An intrachain disulfide couples cysteine 127 to cysteine 204. Residues 130–150 traverse the membrane as a helical segment; sequence YACAGSLFGCASIWTMTMIAF. At 151 to 169 the chain is on the cytoplasmic side; it reads DRYNVIVKGIAAKPMTSNG. A helical transmembrane segment spans residues 170 to 190; sequence ALLRILGIWVFSLAWTLLPFF. Over 191-220 the chain is Extracellular; it reads GWNRYVPEGNMTACGTDYLSKSWVSRSYIL. The N-linked (GlcNAc...) asparagine glycan is linked to asparagine 200. A helical membrane pass occupies residues 221 to 241; it reads IYSVFVYFLPLLLIIYSYFFI. The Cytoplasmic portion of the chain corresponds to 242 to 280; it reads VQAVAAHEKAMREQAKKMNVASLRSSEAANTSAECKLAK. Residues 281 to 301 form a helical membrane-spanning segment; that stretch reads VALMTISLWFMAWTPYLVINY. At 302 to 312 the chain is on the extracellular side; that stretch reads TGVFESAPISP. The chain crosses the membrane as a helical span at residues 313-335; that stretch reads LATIWGSLFAKANAVYNPIVYGI. Residues 336 to 377 lie on the Cytoplasmic side of the membrane; that stretch reads SHPKYQAALYAKFPSLQCQSAPEDAGSVASGTTAVSEEKPAA. The interval 357–377 is disordered; the sequence is PEDAGSVASGTTAVSEEKPAA.

This sequence belongs to the G-protein coupled receptor 1 family. Opsin subfamily. In the retina, expression is abundant and uniform in the anterior-posterior and oblique cells of the retinulae, with some expression in the proximal cells. There is no expression in the dorsal rim retinulae (at protein level).

The protein localises to the cell projection. Its subcellular location is the rhabdomere membrane. Its function is as follows. Visual pigments are the light-absorbing molecules that mediate vision. They consist of an apoprotein, opsin, covalently linked to cis-retinal. May play a role in photoperiodic photoreception. This Manduca sexta (Tobacco hawkmoth) protein is Opsin-1 (OP1).